The primary structure comprises 399 residues: S-adenosylmethionine synthase (399 aa).

His-15 contributes to the ATP binding site. Asp-17 contacts Mg(2+). Glu-43 is a K(+) binding site. Glu-56 and Gln-99 together coordinate L-methionine. The tract at residues 99-109 (QSADIAQGVDN) is flexible loop. ATP contacts are provided by residues 174–176 (DGK), 244–245 (RF), Asp-253, 259–260 (RK), Ala-276, and Lys-280. Asp-253 contacts L-methionine. Residue Lys-284 coordinates L-methionine.

Belongs to the AdoMet synthase family. Homotetramer; dimer of dimers. Mg(2+) serves as cofactor. The cofactor is K(+).

It localises to the cytoplasm. It carries out the reaction L-methionine + ATP + H2O = S-adenosyl-L-methionine + phosphate + diphosphate. The protein operates within amino-acid biosynthesis; S-adenosyl-L-methionine biosynthesis; S-adenosyl-L-methionine from L-methionine: step 1/1. In terms of biological role, catalyzes the formation of S-adenosylmethionine (AdoMet) from methionine and ATP. The overall synthetic reaction is composed of two sequential steps, AdoMet formation and the subsequent tripolyphosphate hydrolysis which occurs prior to release of AdoMet from the enzyme. This is S-adenosylmethionine synthase from Salinispora arenicola (strain CNS-205).